Consider the following 590-residue polypeptide: DELLA protein GAI1 (590 aa).

Positions 1 to 10 (MKREYHHPHH) are enriched in basic residues. The tract at residues 1–28 (MKREYHHPHHPTCSTSPTGKGKMWDADP) is disordered. A DELLA motif motif is present at residues 35-39 (DELLA). The disordered stretch occupies residues 153-182 (HIEQPPQQPPAPPLYQRDNKRLKPTTSATA). The 371-residue stretch at 205–575 (VDSQETGIRL…RPLIATSAWQ (371 aa)) folds into the GRAS domain. The leucine repeat I (LRI) stretch occupies residues 212–266 (IRLVHTLMACAEAVQQENLKLAEALVKQIGFLAVSQAGAMRKVATYFAEGLARRI). The VHIID stretch occupies residues 284 to 349 (QMHFYETCPY…GGPPSFRLTG (66 aa)). Residues 315-319 (VHVID) carry the VHIID motif. Positions 363–395 (EVGWKLAQLAETIHVEFEYRGFVANSLADLDAS) are leucine repeat II (LRII). The segment at 405-496 (VAVNSVFELH…EVYLGQQICN (92 aa)) is PFYRE. The LXXLL motif signature appears at 413–417 (LHSLL). An SAW region spans residues 499 to 575 (ACEGPERVER…RPLIATSAWQ (77 aa)).

Belongs to the GRAS family. DELLA subfamily. Phosphorylated. In terms of processing, ubiquitinated. Upon GA application it is ubiquitinated, leading to its subsequent degradation.

The protein resides in the nucleus. Probable transcriptional regulator that acts as a repressor of the gibberellin (GA) signaling pathway. Probably acts by participating in large multiprotein complexes that repress transcription of GA-inducible genes. Upon GA application, it is degraded by the proteasome, allowing the GA signaling pathway. The chain is DELLA protein GAI1 (GAI1) from Vitis vinifera (Grape).